The primary structure comprises 374 residues: Tomoregulin-2 (374 aa).

A signal peptide spans 1-40 (MVLWESPRQCSSWTLCEGFCWLLLLPVMLLIVARPVKLAA). The Extracellular portion of the chain corresponds to 41 to 320 (FPTSLSDCQT…VPGPVRFQYV (280 aa)). 2 Kazal-like domains span residues 90 to 137 (VCQF…SCAT) and 181 to 229 (VCNI…RCQD). 6 cysteine pairs are disulfide-bonded: Cys91–Cys121, Cys95–Cys114, Cys103–Cys135, Cys182–Cys213, Cys186–Cys206, and Cys195–Cys227. Asn204 carries N-linked (GlcNAc...) (complex) asparagine; atypical glycosylation. A glycan (N-linked (GlcNAc...) asparagine) is linked at Asn230. The EGF-like domain occupies 261 to 301 (HHIPCPEHYNGFCMHGKCEHSINMQEPSCRCDAGYTGQHCE). Cystine bridges form between Cys265–Cys278, Cys273–Cys289, and Cys291–Cys300. Residues 303–320 (KDYSVLYVVPGPVRFQYV) form a required for shedding region. Residues 321–341 (LIAAVIGTIQIAVICVVVLCI) form a helical membrane-spanning segment. Residues 342-374 (TRKCPRSNRIHRQKQNTGHYSSDNTTRASTRLI) lie on the Cytoplasmic side of the membrane. The segment at 353–374 (RQKQNTGHYSSDNTTRASTRLI) is disordered. Polar residues predominate over residues 356-374 (QNTGHYSSDNTTRASTRLI).

The protein belongs to the tomoregulin family. In terms of processing, O-glycosylated; contains chondroitin sulfate glycosaminoglycans. Post-translationally, a soluble form (TMEFF2-ECD) is produced by proteolytic shedding. This shedding can be induced by phorbol ester or pro-inflammatory cytokines such as TNFalpha, and is mediated by ADAM17. As to expression, highly expressed in adult and fetal brain, spinal cord and prostate. Expressed in all brain regions except the pituitary gland, with highest levels in amygdala and corpus callosum. Expressed in the pericryptal myofibroblasts and other stromal cells of normal colonic mucosa. Expressed in prostate carcinoma. Down-regulated in colorectal cancer. Present in Alzheimer disease plaques (at protein level). Isoform 3 is expressed weakly in testis and at high levels in normal and cancerous prostate.

Its subcellular location is the membrane. It localises to the secreted. In terms of biological role, may be a survival factor for hippocampal and mesencephalic neurons. The shedded form up-regulates cancer cell proliferation, probably by promoting ERK1/2 phosphorylation. This is Tomoregulin-2 (TMEFF2) from Homo sapiens (Human).